Consider the following 309-residue polypeptide: Porphobilinogen deaminase (309 aa).

The residue at position 244 (Cys-244) is an S-(dipyrrolylmethanemethyl)cysteine.

Belongs to the HMBS family. In terms of assembly, monomer. Dipyrromethane serves as cofactor.

It catalyses the reaction 4 porphobilinogen + H2O = hydroxymethylbilane + 4 NH4(+). It functions in the pathway porphyrin-containing compound metabolism; protoporphyrin-IX biosynthesis; coproporphyrinogen-III from 5-aminolevulinate: step 2/4. Tetrapolymerization of the monopyrrole PBG into the hydroxymethylbilane pre-uroporphyrinogen in several discrete steps. This chain is Porphobilinogen deaminase, found in Listeria monocytogenes serotype 4a (strain HCC23).